Here is a 201-residue protein sequence, read N- to C-terminus: MCAAGLAAAAAQSVYAFSARQLAGGEPVSLGSLRCKGLLIENVASLUGTTVRDYTQMNEPQRRLGPRGLVVLGFPCNHSGHQENAKNEEILNSLKYVRPGGGFEPNFMLFEKGEVNGAGAHTLFAFLREALPAPSDDATALMIDPKLITWSPVCRNDVAWNFEKFLVGPDGVPLRRYSRRFQTIDIEPDIEALLSQGPSCA.

Serine 32 carries the post-translational modification Phosphoserine. The active site involves selenocysteine 47. Residue selenocysteine 47 is a non-standard amino acid, selenocysteine. N6-acetyllysine; alternate occurs at positions 86, 112, and 146. Residues lysine 86, lysine 112, and lysine 146 each carry the N6-succinyllysine; alternate modification. A phosphoserine mark is found at serine 195 and serine 199.

Belongs to the glutathione peroxidase family. Homotetramer. Interacts with MIEN1. Post-translationally, during periods of oxidative stress, Sec-47 may react with a superoxide radical, irreversibly lose hydroselenide and be converted to dehydroalanine.

The protein localises to the cytoplasm. The protein resides in the mitochondrion. The catalysed reaction is 2 glutathione + H2O2 = glutathione disulfide + 2 H2O. The enzyme catalyses a hydroperoxy polyunsaturated fatty acid + 2 glutathione = a hydroxy polyunsaturated fatty acid + glutathione disulfide + H2O. It carries out the reaction tert-butyl hydroperoxide + 2 glutathione = tert-butanol + glutathione disulfide + H2O. It catalyses the reaction cumene hydroperoxide + 2 glutathione = 2-phenylpropan-2-ol + glutathione disulfide + H2O. The catalysed reaction is (13S)-hydroperoxy-(9Z,11E)-octadecadienoate + 2 glutathione = (13S)-hydroxy-(9Z,11E)-octadecadienoate + glutathione disulfide + H2O. The enzyme catalyses (9S)-hydroperoxy-(10E,12Z)-octadecadienoate + 2 glutathione = (9S)-hydroxy-(10E,12Z)-octadecadienoate + glutathione disulfide + H2O. It carries out the reaction (5S)-hydroperoxy-(6E,8Z,11Z,14Z)-eicosatetraenoate + 2 glutathione = (5S)-hydroxy-(6E,8Z,11Z,14Z)-eicosatetraenoate + glutathione disulfide + H2O. It catalyses the reaction (12S)-hydroperoxy-(5Z,8Z,10E,14Z)-eicosatetraenoate + 2 glutathione = (12S)-hydroxy-(5Z,8Z,10E,14Z)-eicosatetraenoate + glutathione disulfide + H2O. The catalysed reaction is (12R)-hydroperoxy-(5Z,8Z,10E,14Z)-eicosatetraenoate + 2 glutathione = (12R)-hydroxy-(5Z,8Z,10E,14Z)-eicosatetraenoate + glutathione disulfide + H2O. The enzyme catalyses (15S)-hydroperoxy-(5Z,8Z,11Z,13E)-eicosatetraenoate + 2 glutathione = (15S)-hydroxy-(5Z,8Z,11Z,13E)-eicosatetraenoate + glutathione disulfide + H2O. It carries out the reaction (5S)-hydroperoxy-(6E,8Z,11Z,14Z,17Z)-eicosapentaenoate + 2 glutathione = (5S)-hydroxy-(6E,8Z,11Z,14Z,17Z)-eicosapentaenoate + glutathione disulfide + H2O. It catalyses the reaction (12S)-hydroperoxy-(5Z,8Z,10E,14Z,17Z)-eicosapentaenoate + 2 glutathione = (12S)-hydroxy-(5Z,8Z,10E,14Z,17Z)-eicosapentaenoate + glutathione disulfide + H2O. The catalysed reaction is (15S)-hydroperoxy-(5Z,8Z,11Z,13E,17Z)-eicosapentaenoate + 2 glutathione = (15S)-hydroxy-(5Z,8Z,11Z,13E,17Z)-eicosapentaenoate + glutathione disulfide + H2O. The enzyme catalyses (15S)-hydroperoxy-(11Z,13E)-eicosadienoate + 2 glutathione = (15S)-hydroxy-(11Z,13E)-eicosadienoate + glutathione disulfide + H2O. It carries out the reaction (17S)-hydroperoxy-(4Z,7Z,10Z,13Z,15E,19Z)-docosahexaenoate + 2 glutathione = (17S)-hydroxy-(4Z,7Z,10Z,13Z,15E,19Z)-docosahexaenoate + glutathione disulfide + H2O. Its function is as follows. Catalyzes the reduction of hydroperoxides in a glutathione-dependent manner thus regulating cellular redox homeostasis. Can reduce small soluble hydroperoxides such as H2O2, cumene hydroperoxide and tert-butyl hydroperoxide, as well as several fatty acid-derived hydroperoxides. In platelets catalyzes the reduction of 12-hydroperoxyeicosatetraenoic acid, the primary product of the arachidonate 12-lipoxygenase pathway. This is Glutathione peroxidase 1 (GPX1) from Callithrix jacchus (White-tufted-ear marmoset).